A 373-amino-acid polypeptide reads, in one-letter code: Leucine-, isoleucine-, valine-, threonine-, and alanine-binding protein (373 aa).

Residues 1 to 26 (MKKGTQRLSRLFAAMAIAGFASYSMA) form the signal peptide. Cysteines 80 and 105 form a disulfide.

The protein belongs to the leucine-binding protein family.

The protein resides in the periplasm. Functionally, component of the high-affinity leucine, isoleucine, valine transport system I (LIV-I), which is operative without Na(+) and is specific for alanine and threonine, in addition to branched-chain amino acids. Binds L-leucine, L-isoleucine, L-valine, L-threonine and L-alanine with nanomolar affinities. Can also bind L-homoserine with high affinity. The chain is Leucine-, isoleucine-, valine-, threonine-, and alanine-binding protein (braC) from Pseudomonas aeruginosa (strain ATCC 15692 / DSM 22644 / CIP 104116 / JCM 14847 / LMG 12228 / 1C / PRS 101 / PAO1).